Here is a 482-residue protein sequence, read N- to C-terminus: Malvidin galactosylase UGT88C3 (482 aa).

Histidine 16 acts as the Proton acceptor in catalysis. Aspartate 117 functions as the Charge relay in the catalytic mechanism. The UDP site is built by serine 279, tryptophan 345, alanine 349, histidine 366, asparagine 370, serine 371, and glutamate 374.

It belongs to the UDP-glycosyltransferase family. As to expression, highly expressed in leaves, sheaths, pistils and embryos, observed in stems, stem nodes and panicles, and present at low levels in roots.

The protein localises to the endoplasmic reticulum. It localises to the nucleus. It catalyses the reaction malvidin + UDP-alpha-D-galactose = malvidin 3-O-beta-D-galactoside + UDP + H(+). It functions in the pathway pigment biosynthesis; anthocyanin biosynthesis. UDP-glycosyltransferase which uses UDP-galactose and malvidin as substrates to catalyze the biosynthesis of malvidin 3-O-galactoside, an anthocyanin conferring purple pigmentation. This is Malvidin galactosylase UGT88C3 from Oryza sativa subsp. japonica (Rice).